Consider the following 177-residue polypeptide: Small ribosomal subunit protein uS13 (177 aa).

The segment covering 132 to 145 has biased composition (basic residues); that stretch reads GVRHKRGQKVRGQR. The tract at residues 132–177 is disordered; that stretch reads GVRHKRGQKVRGQRTKSTGRTEGTIGVNVEAIKEEQAEDAAAEDDE. The segment covering 167-177 has biased composition (acidic residues); sequence QAEDAAAEDDE.

This sequence belongs to the universal ribosomal protein uS13 family. In terms of assembly, part of the 30S ribosomal subunit. Forms a loose heterodimer with protein S19. Forms two bridges to the 50S subunit in the 70S ribosome.

Its function is as follows. Located at the top of the head of the 30S subunit, it contacts several helices of the 16S rRNA. In the 70S ribosome it contacts the 23S rRNA (bridge B1a) and protein L5 of the 50S subunit (bridge B1b), connecting the 2 subunits; these bridges are implicated in subunit movement. This Haloarcula marismortui (strain ATCC 43049 / DSM 3752 / JCM 8966 / VKM B-1809) (Halobacterium marismortui) protein is Small ribosomal subunit protein uS13.